We begin with the raw amino-acid sequence, 124 residues long: Fluoride-specific ion channel FluC (124 aa).

Transmembrane regions (helical) follow at residues 5 to 25 (VYIA…SGLV), 32 to 52 (SFPY…GLVM), 67 to 87 (FAIT…SFET), and 96 to 116 (LLIA…CTWI). Na(+) contacts are provided by Gly75 and Thr78.

The protein belongs to the fluoride channel Fluc/FEX (TC 1.A.43) family.

The protein resides in the cell inner membrane. The enzyme catalyses fluoride(in) = fluoride(out). Its activity is regulated as follows. Na(+) is not transported, but it plays an essential structural role and its presence is essential for fluoride channel function. Its function is as follows. Fluoride-specific ion channel. Important for reducing fluoride concentration in the cell, thus reducing its toxicity. The polypeptide is Fluoride-specific ion channel FluC (Geobacter sp. (strain M21)).